The chain runs to 158 residues: NAD(P)H-quinone oxidoreductase subunit J, chloroplastic (158 aa).

It belongs to the complex I 30 kDa subunit family. NDH is composed of at least 16 different subunits, 5 of which are encoded in the nucleus.

The protein resides in the plastid. It is found in the chloroplast thylakoid membrane. It carries out the reaction a plastoquinone + NADH + (n+1) H(+)(in) = a plastoquinol + NAD(+) + n H(+)(out). The enzyme catalyses a plastoquinone + NADPH + (n+1) H(+)(in) = a plastoquinol + NADP(+) + n H(+)(out). In terms of biological role, NDH shuttles electrons from NAD(P)H:plastoquinone, via FMN and iron-sulfur (Fe-S) centers, to quinones in the photosynthetic chain and possibly in a chloroplast respiratory chain. The immediate electron acceptor for the enzyme in this species is believed to be plastoquinone. Couples the redox reaction to proton translocation, and thus conserves the redox energy in a proton gradient. The chain is NAD(P)H-quinone oxidoreductase subunit J, chloroplastic from Morus indica (Mulberry).